A 407-amino-acid polypeptide reads, in one-letter code: Sensor histidine kinase YdfH (407 aa).

Residues 1-25 (MLIRNPFKDKYYSHDRRALNMLALR) lie on the Cytoplasmic side of the membrane. Helical transmembrane passes span 26-46 (VPGLAFILMIYIASIVLQFVS) and 47-67 (GGWSILLLYAFTILIAIFALL). Residues 68-78 (HWHSYRWVKKR) are Cytoplasmic-facing. The next 2 membrane-spanning stretches (helical) occupy residues 79–99 (VILYFAVQGLITFALANLMTG) and 100–120 (FFILVIIGLYAFLIGQIIGMA). Over 121–125 (DRRRT) the chain is Cytoplasmic. The chain crosses the membrane as a helical span at residues 126 to 146 (FLILYLLLLLVINSAYHLHKG). Residues 147–150 (EVLH) lie on the Extracellular side of the membrane. Residues 151-171 (FIVIAAPIMIVIITYAATFFA) traverse the membrane as a helical segment. Over 172-407 (QVDEKIKAQL…VPIQGEMQDE (236 aa)) the chain is Cytoplasmic. The Histidine kinase domain occupies 201-402 (ERQRMARDLH…QIEITVPIQG (202 aa)). His-210 carries the post-translational modification Phosphohistidine; by autocatalysis.

The protein localises to the cell membrane. It carries out the reaction ATP + protein L-histidine = ADP + protein N-phospho-L-histidine.. Functionally, member of the two-component regulatory system YdfH/YdfI. May activate YdfI by phosphorylation. The sequence is that of Sensor histidine kinase YdfH (ydfH) from Bacillus subtilis (strain 168).